We begin with the raw amino-acid sequence, 406 residues long: MSLAGKKIVLGVSGGIAAYKTPELVRRLRDRGADVRVAMTEAAKAFITPLSLQAVSGYPVSDSLLDPAAEAAMGHIELGKWADLVILAPATADLIARVAAGMANDLVSTICLATPAPVAVLPAMNQQMYRAAATQHNLEVLASRGLLIWGPDSGSQACGDIGPGRMLDPLTIVDMAVAHFSPVNDLKHLNIMITAGPTREPLDPVRYISNHSSGKMGFAIAAAAARRGANVTLVSGPVSLPTPPFVKRVDVMTALEMEAAVNASVQQQNIFIGCAAVADYRAATVAPEKIKKQATQGDELTIKMVKNPDIVAGVAALKDHRPYVVGFAAETNNVEEYARQKRIRKNLDLICANDVSQPTQGFNSDNNALHLFWQDGDKVLPLERKELLGQLLLDEIVTRYDEKNRR.

Residues 2–190 (SLAGKKIVLG…SPVNDLKHLN (189 aa)) are phosphopantothenoylcysteine decarboxylase. The Proton donor role is filled by Cys158. The interval 191–406 (IMITAGPTRE…VTRYDEKNRR (216 aa)) is phosphopantothenate--cysteine ligase. CTP-binding positions include 273 to 275 (GCA), Asp279, Lys289, 308 to 311 (PDIV), Phe327, Lys341, and Lys345.

The protein in the N-terminal section; belongs to the HFCD (homo-oligomeric flavin containing Cys decarboxylase) superfamily. This sequence in the C-terminal section; belongs to the PPC synthetase family. Mg(2+) is required as a cofactor. FMN serves as cofactor.

It catalyses the reaction N-[(R)-4-phosphopantothenoyl]-L-cysteine + H(+) = (R)-4'-phosphopantetheine + CO2. The enzyme catalyses (R)-4'-phosphopantothenate + L-cysteine + CTP = N-[(R)-4-phosphopantothenoyl]-L-cysteine + CMP + diphosphate + H(+). Its pathway is cofactor biosynthesis; coenzyme A biosynthesis; CoA from (R)-pantothenate: step 2/5. The protein operates within cofactor biosynthesis; coenzyme A biosynthesis; CoA from (R)-pantothenate: step 3/5. In terms of biological role, catalyzes two sequential steps in the biosynthesis of coenzyme A. In the first step cysteine is conjugated to 4'-phosphopantothenate to form 4-phosphopantothenoylcysteine. In the second step the latter compound is decarboxylated to form 4'-phosphopantotheine. The sequence is that of Coenzyme A biosynthesis bifunctional protein CoaBC from Escherichia coli O6:H1 (strain CFT073 / ATCC 700928 / UPEC).